Here is a 105-residue protein sequence, read N- to C-terminus: MVKQIESKYAFQEALNSAGEKLVVVDFSATWCGPCKMIKPFFHSLSEKYSNVVFLEVDVDDCQDVAAECEVKCMPTFQFFKKGQKVSEFSGANKEKLEATINELI.

The Thioredoxin domain occupies 2–105; sequence VKQIESKYAF…KLEATINELI (104 aa). At Lys-3 the chain carries N6-acetyllysine. Residue Lys-8 is modified to N6-succinyllysine. Active-site nucleophile residues include Cys-32 and Cys-35. A disulfide bond links Cys-32 and Cys-35. N6-acetyllysine is present on Lys-39. 2 positions are modified to S-nitrosocysteine: Cys-62 and Cys-69. Cys-73 carries the S-nitrosocysteine; alternate modification. Lys-94 is modified (N6-acetyllysine; alternate). Lys-94 is subject to N6-succinyllysine; alternate.

Belongs to the thioredoxin family. As to quaternary structure, homodimer; disulfide-linked. Interacts with TXNIP through the redox-active site. Interacts with MAP3K5 and CASP3. Interacts with APEX1; the interaction stimulates the FOS/JUN AP-1 DNA-binding activity in a redox-dependent manner. In the fully reduced protein, both Cys-69 and Cys-73 are nitrosylated in response to nitric oxide (NO). When two disulfide bonds are present in the protein, only Cys-73 is nitrosylated. Cys-73 can serve as donor for nitrosylation of target proteins.

The protein resides in the nucleus. It is found in the cytoplasm. The protein localises to the secreted. Functionally, participates in various redox reactions through the reversible oxidation of its active center dithiol to a disulfide and catalyzes dithiol-disulfide exchange reactions. Plays a role in the reversible S-nitrosylation of cysteine residues in target proteins, and thereby contributes to the response to intracellular nitric oxide. Nitrosylates the active site Cys of CASP3 in response to nitric oxide (NO), and thereby inhibits caspase-3 activity. Induces the FOS/JUN AP-1 DNA binding activity in ionizing radiation (IR) cells through its oxidation/reduction status and stimulates AP-1 transcriptional activity. In Ovis aries (Sheep), this protein is Thioredoxin (TXN).